The sequence spans 306 residues: 33 kDa chaperonin (306 aa).

Cystine bridges form between cysteine 242–cysteine 244 and cysteine 275–cysteine 278.

Belongs to the HSP33 family. In terms of processing, under oxidizing conditions two disulfide bonds are formed involving the reactive cysteines. Under reducing conditions zinc is bound to the reactive cysteines and the protein is inactive.

The protein localises to the cytoplasm. Its function is as follows. Redox regulated molecular chaperone. Protects both thermally unfolding and oxidatively damaged proteins from irreversible aggregation. Plays an important role in the bacterial defense system toward oxidative stress. This is 33 kDa chaperonin from Gloeobacter violaceus (strain ATCC 29082 / PCC 7421).